The primary structure comprises 273 residues: Hydroxyethylthiazole kinase (273 aa).

Met49 provides a ligand contact to substrate. Residues Lys125 and Thr171 each contribute to the ATP site. Gly198 serves as a coordination point for substrate.

This sequence belongs to the Thz kinase family. Requires Mg(2+) as cofactor.

It carries out the reaction 5-(2-hydroxyethyl)-4-methylthiazole + ATP = 4-methyl-5-(2-phosphooxyethyl)-thiazole + ADP + H(+). The protein operates within cofactor biosynthesis; thiamine diphosphate biosynthesis; 4-methyl-5-(2-phosphoethyl)-thiazole from 5-(2-hydroxyethyl)-4-methylthiazole: step 1/1. Functionally, catalyzes the phosphorylation of the hydroxyl group of 4-methyl-5-beta-hydroxyethylthiazole (THZ). The sequence is that of Hydroxyethylthiazole kinase from Natranaerobius thermophilus (strain ATCC BAA-1301 / DSM 18059 / JW/NM-WN-LF).